A 38-amino-acid chain; its full sequence is Large ribosomal subunit protein bL36 (38 aa).

Belongs to the bacterial ribosomal protein bL36 family.

The chain is Large ribosomal subunit protein bL36 from Hamiltonella defensa subsp. Acyrthosiphon pisum (strain 5AT).